A 410-amino-acid polypeptide reads, in one-letter code: Multifunctional CCA protein (410 aa).

ATP is bound by residues G8 and R11. Positions 8 and 11 each coordinate CTP. Mg(2+) contacts are provided by E21 and D23. Positions 91, 137, and 140 each coordinate ATP. 3 residues coordinate CTP: R91, R137, and R140. An HD domain is found at 228–329 (TGIHSLMTLR…VKLLEQVDAF (102 aa)).

It belongs to the tRNA nucleotidyltransferase/poly(A) polymerase family. Bacterial CCA-adding enzyme type 1 subfamily. In terms of assembly, monomer. Can also form homodimers and oligomers. The cofactor is Mg(2+). Requires Ni(2+) as cofactor.

It carries out the reaction a tRNA precursor + 2 CTP + ATP = a tRNA with a 3' CCA end + 3 diphosphate. It catalyses the reaction a tRNA with a 3' CCA end + 2 CTP + ATP = a tRNA with a 3' CCACCA end + 3 diphosphate. Functionally, catalyzes the addition and repair of the essential 3'-terminal CCA sequence in tRNAs without using a nucleic acid template. Adds these three nucleotides in the order of C, C, and A to the tRNA nucleotide-73, using CTP and ATP as substrates and producing inorganic pyrophosphate. tRNA 3'-terminal CCA addition is required both for tRNA processing and repair. Also involved in tRNA surveillance by mediating tandem CCA addition to generate a CCACCA at the 3' terminus of unstable tRNAs. While stable tRNAs receive only 3'-terminal CCA, unstable tRNAs are marked with CCACCA and rapidly degraded. The polypeptide is Multifunctional CCA protein (Legionella pneumophila (strain Lens)).